We begin with the raw amino-acid sequence, 210 residues long: Large ribosomal subunit protein uL3 (210 aa).

The segment at 119–143 is disordered; that stretch reads GYQGNIKKDGQSRGPMAHGSRYHRR.

It belongs to the universal ribosomal protein uL3 family. As to quaternary structure, part of the 50S ribosomal subunit. Forms a cluster with proteins L14 and L19.

Functionally, one of the primary rRNA binding proteins, it binds directly near the 3'-end of the 23S rRNA, where it nucleates assembly of the 50S subunit. This is Large ribosomal subunit protein uL3 from Lacticaseibacillus casei (strain BL23) (Lactobacillus casei).